Consider the following 2586-residue polypeptide: Highly reducing polyketide synthase FUM1 (2586 aa).

Residues 29 to 451 (VLPVAIVGMG…GANAHCIIET (423 aa)) enclose the Ketosynthase family 3 (KS3) domain. Residues Cys201, His336, and His374 each act as for beta-ketoacyl synthase activity in the active site. Residues 609–928 (IFTGQGAQWV…TESLLKLAGE (320 aa)) form a malonyl-CoA:ACP transacylase (MAT) domain region. The segment at 980–1111 (HELLGSRTLE…GQVRPGQDAH (132 aa)) is N-terminal hotdog fold. Residues 980–1269 (HELLGSRTLE…LEDGKFSPLE (290 aa)) are dehydratase (DH) domain. The PKS/mFAS DH domain maps to 980–1274 (HELLGSRTLE…FSPLEMDLAE (295 aa)). His1012 (proton acceptor; for dehydratase activity) is an active-site residue. Positions 1125–1274 (QHYPRLVDNL…FSPLEMDLAE (150 aa)) are C-terminal hotdog fold. Catalysis depends on Asp1186, which acts as the Proton donor; for dehydratase activity. Positions 1450 to 1627 (DFFATAGHTR…GFSGVDSAIY (178 aa)) are methyltransferase (CMet) domain. The interval 1862 to 2172 (GLLQTLGWVP…KGVHLGKIVV (311 aa)) is enoyl reductase (ER) (ER) domain. Residues 2197 to 2373 (ASYLLVGGLG…ASVLQIGLIE (177 aa)) are ketoreductase (KR) domain. The region spanning 2486–2565 (PATVELVTNE…GLARLTVDGL (80 aa)) is the Carrier domain. The residue at position 2524 (Ser2524) is an O-(pantetheine 4'-phosphoryl)serine.

It participates in mycotoxin biosynthesis. Functionally, highly reducing polyketide synthase; part of the gene cluster that mediates the biosynthesis of fumonisins B1 (FB1), B2 (FB2), B3 (FB3), and B4 (FB4), which are carcinogenic mycotoxins. The biosynthesis starts with the FUM1-catalyzed carbon chain assembly from one molecule of acetyl-CoA, eight molecules of malonyl-CoA, and two molecules of methionine (in S-adenosyl form). The C18 polyketide chain is released from the enzyme by a nucleophilic attack of a carbanion, which is derived from R-carbon of alanine by decarboxylation, on the carbonyl carbon of polyketide acyl chain. This step is catalyzed by the pyridoxal 5'-phosphate-dependent aminoacyl transferase FUM8. The resultant 3-keto intermediate is then stereospecifically reduced to a 3-hydroxyl product by reductase FUM13. Subsequent oxidations at C-10 by the cytochrome P450 monooxygenase FUM2, C-14 and C-15 by FUM6, FUM12 or FUM15, tricarballylic esterification of the hydroxyl groups on C-14 and C-15 by acyltransferase FUM14, and C-5 hydroxylation by 2-keto-glutarate-dependent dioxygenase FUM3 furnish the biosynthesis of fumonisins. The tricarballylic moieties are most likely derived from the citric acid cycle, and their addition to the carbon backbone may involve FUM7, FUM10, FUM11 and FUM14. In Gibberella moniliformis (strain M3125 / FGSC 7600) (Maize ear and stalk rot fungus), this protein is Highly reducing polyketide synthase FUM1.